We begin with the raw amino-acid sequence, 397 residues long: Odorant receptor 98a (397 aa).

At 1–43 the chain is on the cytoplasmic side; sequence MLFNYLRKPNPTNLLTSPDSFRYFEYGMFCMGWHTPATHKIIY. The helical transmembrane segment at 44-64 threads the bilayer; sequence YITSCLIFAWCAVYLPIGIII. Residues 65–77 lie on the Extracellular side of the membrane; the sequence is SFKTDINTFTPNE. A helical membrane pass occupies residues 78-98; the sequence is LLTVMQLFFNSVGMPFKVLFF. The Cytoplasmic portion of the chain corresponds to 99-138; it reads NLYISGFYKAKKLLSEMDKRCTTLKERVEVHQGVVRCNKA. The helical transmembrane segment at 139-159 threads the bilayer; it reads YLIYQFIYTAYTISTFLSAAL. At 160–192 the chain is on the extracellular side; the sequence is SGKLPWRIYNPFVDFRESRSSFWKAALNETALM. Asparagine 187 carries N-linked (GlcNAc...) asparagine glycosylation. The chain crosses the membrane as a helical span at residues 193–213; the sequence is LFAVTQTLMSDIYPLLYGLIL. Over 214-266 the chain is Cytoplasmic; the sequence is RVHLKLLRLRVESLCTDSGKSDAENEQDLIKCIKDHNLIIDYAAAIRPAVTRT. The chain crosses the membrane as a helical span at residues 267-287; it reads IFVQFLLIGICLGLSMINLLF. Topologically, residues 288–293 are extracellular; sequence FADIWT. A helical transmembrane segment spans residues 294-314; the sequence is GLATVAYINGLMVQTFPFCFV. The Cytoplasmic segment spans residues 315–354; it reads CDLLKKDCELLVSAIFHSNWINSSRSYKSSLRYFLKNAQK. The helical transmembrane segment at 355–375 threads the bilayer; the sequence is SIAFTAGSIFPISTGSNIKVA. The Extracellular segment spans residues 376–397; that stretch reads KLAFSVVTFVNQLNIADRLTKN.

It belongs to the insect chemoreceptor superfamily. Heteromeric odorant receptor channel (TC 1.A.69) family. Or2a subfamily. In terms of assembly, interacts with Orco. Complexes exist early in the endomembrane system in olfactory sensory neurons (OSNs), coupling these complexes to the conserved ciliary trafficking pathway. In terms of tissue distribution, expressed in olfactory sensory neurons in the antenna.

It localises to the cell membrane. In terms of biological role, odorant receptor which mediates acceptance or avoidance behavior, depending on its substrates. The odorant receptor repertoire encodes a large collection of odor stimuli that vary widely in identity, intensity, and duration. May form a complex with Orco to form odorant-sensing units, providing sensitive and prolonged odorant signaling and calcium permeability. This is Odorant receptor 98a (Or98a) from Drosophila melanogaster (Fruit fly).